We begin with the raw amino-acid sequence, 102 residues long: MQKARIKLASTNIKALNEVTDQIKQIAERTGVRMSGPIPLPTKRIRITTRKSPDGEGTATFDRFELRVHKRLVDIEADERAMRQIMRIRVPEDVTIEIELIS.

The protein belongs to the universal ribosomal protein uS10 family. Part of the 30S ribosomal subunit.

Functionally, involved in the binding of tRNA to the ribosomes. The chain is Small ribosomal subunit protein uS10 from Thermococcus gammatolerans (strain DSM 15229 / JCM 11827 / EJ3).